The sequence spans 272 residues: Type II secretion system protein C (272 aa).

Topologically, residues 1–16 (MNISKLPPLSPSVIRR) are cytoplasmic. The helical transmembrane segment at 17-35 (ILFYLLMLLFCQQLAMIFW) threads the bilayer. At 36 to 272 (RVGLPDNSPV…DIYMEFGGDE (237 aa)) the chain is on the periplasmic side.

The protein belongs to the GSP C family.

The protein localises to the cell inner membrane. Functionally, involved in a type II secretion system (T2SS, formerly general secretion pathway, GSP) for the export of proteins. Required for the translocation of the multiple pectic enzymes. This chain is Type II secretion system protein C (outC), found in Dickeya chrysanthemi (Pectobacterium chrysanthemi).